We begin with the raw amino-acid sequence, 339 residues long: Geranylgeranyl pyrophosphate synthase AN1592 (339 aa).

Isopentenyl diphosphate is bound by residues K41, R44, and H73. Residues D80 and D84 each contribute to the Mg(2+) site. A dimethylallyl diphosphate-binding site is contributed by R89. Position 90 (R90) interacts with isopentenyl diphosphate. Residues K192, T193, and Q228 each coordinate dimethylallyl diphosphate. Residue D231 coordinates Mg(2+). 3 residues coordinate dimethylallyl diphosphate: N235, K245, and K255.

This sequence belongs to the FPP/GGPP synthase family. Requires Mg(2+) as cofactor.

The catalysed reaction is isopentenyl diphosphate + dimethylallyl diphosphate = (2E)-geranyl diphosphate + diphosphate. It catalyses the reaction isopentenyl diphosphate + (2E)-geranyl diphosphate = (2E,6E)-farnesyl diphosphate + diphosphate. The enzyme catalyses isopentenyl diphosphate + (2E,6E)-farnesyl diphosphate = (2E,6E,10E)-geranylgeranyl diphosphate + diphosphate. It participates in secondary metabolite biosynthesis. In terms of biological role, geranylgeranyl pyrophosphate synthase; part of the gene cluster that mediates the biosynthesis of erinacines, cyathane-xylosides that show unique biological activities, including leishmanicidal activity, stimulating activity for nerve growth-factor synthesis, and agonistic activity toward the kappa opioid receptor. The geranylgeranyl diphosphate (GGPP) synthase eriE catalyzes the first step in erinacines biosynthesis via conversion of farnesyl pyrophosphate and isopentyl pyrophosphate into geranylgeranyl pyrophosphate (GGPP). GGPP is then substrate of the diterpene cyclase eriG for the production of cyatha-3,12-diene. The cytochrome P450 monooxygenase eriI then hydroxylates cyatha-3,12-diene at C-14 of the seven-membered ring to produce erinacol, which is further hydroxylated at C-15 by the cytochrome P450 monooxygenase eriC to yield cyathadiol. The cytochrome P450 monooxygenase eriA then catalyzes C-11 hydroxylation in the presence of the short chain dehydrogenase/reductase (SDR) eriH, which leads to the production of cyathatriol. The acetyltransferase eriL converts cyathatriol into 11-O-acetyl-cyathatriol. The SDR eriH catalyzes further oxidation of 11-O-acetyl-cyathatriol into 1-O-acetylcyathin A3. Finally, the glycosyl transferase eriJ tranfers xylose from UDP-xylose onto C-14 of 11-O-acetyl-cyathatriol to form eracine Q. EriJ is also able to convert 11-O-acetyl-cyathatriol to eracine Q2 by using UDP-D-glucose as cosubstrate, but at a lower rate. In the absence of eriL and eriJ, the SDR eriH is able to convert cyathatriol to cyathin A3; this is likely a switching mechanism in the biosynthesis of cyathins (C-14 ketogroup)and erinacines (C-14 glycosylated group). The roles of the SDR eriB, the polyprenyl transferase eriF and the dehydrogenase eriK have still to be identified. The chain is Geranylgeranyl pyrophosphate synthase AN1592 from Hericium erinaceus (Lion's mane mushroom).